We begin with the raw amino-acid sequence, 37 residues long: Esculentin-2JDa (37 aa).

Residues cysteine 31 and cysteine 37 are joined by a disulfide bond.

As to expression, expressed by the skin glands.

Its subcellular location is the secreted. Has antibacterial activity against E.coli and S.aureus strains. This is Esculentin-2JDa from Odorrana jingdongensis (Jingdong frog).